A 321-amino-acid polypeptide reads, in one-letter code: Protein FAM110C (321 aa).

Disordered regions lie at residues 1 to 84 (MRAL…APAP) and 111 to 203 (RGSG…SQSD). Basic and acidic residues-rich tracts occupy residues 15 to 46 (LLPR…DRAK) and 131 to 145 (GKDK…DEGK). Over residues 169-181 (APAARSAAPSSVP) the composition is skewed to low complexity. At S241 the chain carries Phosphoserine.

It belongs to the FAM110 family. In terms of assembly, interacts with AKT1; the interaction is transient and follows AKT1 activation. Interacts with PPP2CA and alpha-tubulin. Detected in stomach, thyroid, trachea, adrenal gland and testis, and at low levels in prostate, ovary, intestine, colon, spinal cord and lymph node.

It is found in the cytoplasm. It localises to the cytoskeleton. The protein localises to the microtubule organizing center. Its subcellular location is the centrosome. The protein resides in the spindle pole. It is found in the nucleus. Its function is as follows. May play a role in microtubule organization. May play a role in cell spreading and cell migration of epithelial cells; the function may involve the AKT1 signaling pathway. In Homo sapiens (Human), this protein is Protein FAM110C (FAM110C).